The following is a 229-amino-acid chain: 7-cyano-7-deazaguanine synthase (229 aa).

Residue 14 to 24 participates in ATP binding; that stretch reads LSGGQDSTTCL. Zn(2+) contacts are provided by Cys-192, Cys-200, Cys-203, and Cys-206.

This sequence belongs to the QueC family. Zn(2+) serves as cofactor.

It carries out the reaction 7-carboxy-7-deazaguanine + NH4(+) + ATP = 7-cyano-7-deazaguanine + ADP + phosphate + H2O + H(+). It participates in purine metabolism; 7-cyano-7-deazaguanine biosynthesis. Its function is as follows. Catalyzes the ATP-dependent conversion of 7-carboxy-7-deazaguanine (CDG) to 7-cyano-7-deazaguanine (preQ(0)). The protein is 7-cyano-7-deazaguanine synthase of Laribacter hongkongensis (strain HLHK9).